A 398-amino-acid chain; its full sequence is Fatty-acid-binding protein 2 (398 aa).

Residues Arg-222, Tyr-235, and Ser-302 each contribute to the dodecanoate site.

The protein belongs to the chalcone isomerase family. As to expression, expressed in developing cotyledons, young seedlings, roots, seeds, embryos, macrospores, preanthesis and tapetum. Restricted to developing and reproductive tissues.

The protein resides in the plastid. It localises to the chloroplast stroma. In terms of biological role, fatty-acid-binding protein. Associates with saturated fatty acid. This is Fatty-acid-binding protein 2 (FAP2) from Arabidopsis thaliana (Mouse-ear cress).